A 68-amino-acid polypeptide reads, in one-letter code: MKIFQRYNPLQVAKYVKILFRGRLYIKDVGAFEFDKGKILIPKVKDKLHLSVMSEVNRQVMRLQTEMA.

This is an uncharacterized protein from Escherichia coli O6:H1 (strain CFT073 / ATCC 700928 / UPEC).